The chain runs to 136 residues: Small ribosomal subunit protein uS9 (136 aa).

The protein belongs to the universal ribosomal protein uS9 family.

The sequence is that of Small ribosomal subunit protein uS9 from Borrelia garinii subsp. bavariensis (strain ATCC BAA-2496 / DSM 23469 / PBi) (Borreliella bavariensis).